A 437-amino-acid chain; its full sequence is ATP-dependent protease ATPase subunit HslU (437 aa).

ATP-binding positions include Val-18, 60–65 (GCGKTE), Asp-250, Glu-315, and Arg-387.

It belongs to the ClpX chaperone family. HslU subfamily. A double ring-shaped homohexamer of HslV is capped on each side by a ring-shaped HslU homohexamer. The assembly of the HslU/HslV complex is dependent on binding of ATP.

The protein localises to the cytoplasm. In terms of biological role, ATPase subunit of a proteasome-like degradation complex; this subunit has chaperone activity. The binding of ATP and its subsequent hydrolysis by HslU are essential for unfolding of protein substrates subsequently hydrolyzed by HslV. HslU recognizes the N-terminal part of its protein substrates and unfolds these before they are guided to HslV for hydrolysis. In Methylobacterium radiotolerans (strain ATCC 27329 / DSM 1819 / JCM 2831 / NBRC 15690 / NCIMB 10815 / 0-1), this protein is ATP-dependent protease ATPase subunit HslU.